Here is a 607-residue protein sequence, read N- to C-terminus: ATP-dependent RNA helicase-like protein DB10 (607 aa).

The span at methionine 1 to glycine 10 shows a compositional bias: polar residues. Disordered regions lie at residues methionine 1 to lysine 25 and valine 66 to serine 108. Positions proline 18–proline 52 constitute a WW domain. Residues arginine 89–serine 98 show a composition bias toward polar residues. The span at serine 99 to serine 108 shows a compositional bias: basic and acidic residues. The Q motif motif lies at threonine 145–alanine 173. Positions tryptophan 176–valine 350 constitute a Helicase ATP-binding domain. Alanine 189–threonine 196 is a binding site for ATP. The short motif at aspartate 298–aspartate 301 is the DEAD box element. A Helicase C-terminal domain is found at arginine 379 to alanine 523. Positions leucine 519–aspartate 607 are disordered. Over residues serine 538–glycine 548 the composition is skewed to gly residues. A compositionally biased stretch (basic and acidic residues) spans glycine 562 to glycine 574.

The protein belongs to the DEAD box helicase family.

The catalysed reaction is ATP + H2O = ADP + phosphate + H(+). This Nicotiana sylvestris (Wood tobacco) protein is ATP-dependent RNA helicase-like protein DB10.